A 900-amino-acid polypeptide reads, in one-letter code: DNA mismatch repair protein MutS (900 aa).

637-644 lines the ATP pocket; sequence GPNMAGKS.

This sequence belongs to the DNA mismatch repair MutS family.

Functionally, this protein is involved in the repair of mismatches in DNA. It is possible that it carries out the mismatch recognition step. This protein has a weak ATPase activity. The sequence is that of DNA mismatch repair protein MutS from Methanosarcina barkeri (strain Fusaro / DSM 804).